The primary structure comprises 229 residues: DNA repair protein RecO (229 aa).

The protein belongs to the RecO family.

Functionally, involved in DNA repair and RecF pathway recombination. This is DNA repair protein RecO from Legionella pneumophila (strain Corby).